The following is a 546-amino-acid chain: CTP synthase (546 aa).

Residues M1–I269 are amidoligase domain. S17 provides a ligand contact to CTP. Residue S17 participates in UTP binding. ATP is bound by residues S18–L23 and D75. The Mg(2+) site is built by D75 and E143. Residues D150 to E152, K190 to Q195, and K226 contribute to the CTP site. UTP is bound by residues K190–Q195 and K226. The Glutamine amidotransferase type-1 domain occupies R295–A537. L-glutamine is bound at residue G357. The active-site Nucleophile; for glutamine hydrolysis is the C384. Residues L385 to Q388, E408, and R465 each bind L-glutamine. Active-site residues include H510 and E512.

Belongs to the CTP synthase family. As to quaternary structure, homotetramer.

The enzyme catalyses UTP + L-glutamine + ATP + H2O = CTP + L-glutamate + ADP + phosphate + 2 H(+). The catalysed reaction is L-glutamine + H2O = L-glutamate + NH4(+). It carries out the reaction UTP + NH4(+) + ATP = CTP + ADP + phosphate + 2 H(+). It participates in pyrimidine metabolism; CTP biosynthesis via de novo pathway; CTP from UDP: step 2/2. With respect to regulation, allosterically activated by GTP, when glutamine is the substrate; GTP has no effect on the reaction when ammonia is the substrate. The allosteric effector GTP functions by stabilizing the protein conformation that binds the tetrahedral intermediate(s) formed during glutamine hydrolysis. Inhibited by the product CTP, via allosteric rather than competitive inhibition. In terms of biological role, catalyzes the ATP-dependent amination of UTP to CTP with either L-glutamine or ammonia as the source of nitrogen. Regulates intracellular CTP levels through interactions with the four ribonucleotide triphosphates. The sequence is that of CTP synthase from Myxococcus xanthus (strain DK1622).